The sequence spans 265 residues: Neuronal membrane glycoprotein M6-b (265 aa).

Residues 31–51 traverse the membrane as a helical segment; that stretch reads GGVPYASLVATILCFSGVALF. Asparagine 73 is a glycosylation site (N-linked (GlcNAc...) asparagine). 2 consecutive transmembrane segments (helical) span residues 90-110 and 136-156; these read VIYGIASFFFLYVIILLAEGF and FVFLTYVLGVAWLGVFGFSAV. N-linked (GlcNAc...) asparagine glycosylation occurs at asparagine 177. The helical transmembrane segment at 224–244 threads the bilayer; sequence LFIVACAGAGATVIALLIYMM. A Phosphoserine modification is found at serine 257.

This sequence belongs to the myelin proteolipid protein family. As to quaternary structure, interacts with SERT.

It localises to the membrane. It is found in the cell membrane. Functionally, may be involved in neural development. Involved in regulation of osteoblast function and bone formation. Involved in matrix vesicle release by osteoblasts; this function seems to involve maintenance of the actin cytoskeleton. May be involved in cellular trafficking of SERT and thereby in regulation of serotonin uptake. The polypeptide is Neuronal membrane glycoprotein M6-b (GPM6B) (Pongo abelii (Sumatran orangutan)).